The sequence spans 63 residues: Cytochrome c oxidase subunit 5C (63 aa).

A helical transmembrane segment spans residues 16-34 (VVKEIFIGLTLGLVAGGMW).

It belongs to the cytochrome c oxidase subunit 5C family.

It is found in the mitochondrion inner membrane. Functionally, this protein is one of the nuclear-coded polypeptide chains of cytochrome c oxidase, the terminal oxidase in mitochondrial electron transport. In Hordeum vulgare (Barley), this protein is Cytochrome c oxidase subunit 5C (COX5C).